We begin with the raw amino-acid sequence, 323 residues long: Magnesium transporter NIPA1 (323 aa).

Topologically, residues 1 to 21 (MGTAAAAAAAGEGARGPSPAA) are extracellular. A helical transmembrane segment spans residues 22 to 42 (VSLGLGVAVVSSLVNGSTFVL). Residues 43–60 (QKKGIVRAKRRGTSYLTD) are Cytoplasmic-facing. Residues 61–81 (IVWWAGTIAMAVGQIGNFLAY) traverse the membrane as a helical segment. Thr-82 is a topological domain (extracellular). The helical transmembrane segment at 83 to 103 (AVPTVLVTPLGALGVPFGSIL) threads the bilayer. At 104–111 (ASYLLKEK) the chain is on the cytoplasmic side. The helical transmembrane segment at 112–132 (LNILGKLGCLLSCAGSVVLII) threads the bilayer. Residues 133–153 (HSPKSESVTTQAELEEKLTNP) lie on the Extracellular side of the membrane. Residues 154–174 (VFVGYLCIVLLMLLLLIFWIA) form a helical membrane-spanning segment. Topologically, residues 175–177 (PAH) are cytoplasmic. Residues 178–198 (GPTNIMVYISICSLLGSFTVP) traverse the membrane as a helical segment. At 199-218 (STKGIGLAAQDILHNNPSSQ) the chain is on the extracellular side. A helical membrane pass occupies residues 219–239 (RALCLCLVLLAVLGCSIIVQF). The Cytoplasmic segment spans residues 240 to 253 (RYINKALECFDSSV). The chain crosses the membrane as a helical span at residues 254-274 (FGAIYYVVFTTLVLLASAILF). Over 275 to 284 (REWSNVGLVD) the chain is Extracellular. A helical transmembrane segment spans residues 285 to 305 (FLGMACGFTTVSVGIVLIQVF). At 306-323 (KEFNFNLGEMNKSNMKTD) the chain is on the cytoplasmic side.

This sequence belongs to the NIPA family. Homodimer. Widely expressed. Predominantly expressed in neuronal tissues. Brain, heart, kidney, liver and colon (at protein level).

The protein localises to the cell membrane. The protein resides in the early endosome. The catalysed reaction is Mg(2+)(in) = Mg(2+)(out). In terms of biological role, acts as a Mg(2+) transporter. Can also transport other divalent cations such as Fe(2+), Sr(2+), Ba(2+), Zn(2+) and Co(2+) but to a much less extent than Mg(2+). This is Magnesium transporter NIPA1 (Nipa1) from Mus musculus (Mouse).